The primary structure comprises 503 residues: Inosine-5'-monophosphate dehydrogenase 1 (503 aa).

S2 carries the post-translational modification N-acetylserine. The region spanning 167-225 (MKSCDSSDYCVPWEIDFEKLEFVLEDKQKGFVVLERDGETVNVVTKDDIQRVKGYPKSG) is the CBS domain. NAD(+)-binding positions include 265 to 267 (DSS) and 315 to 317 (GMG). K(+)-binding residues include G317 and G319. S320 is an IMP binding site. Residue C322 participates in K(+) binding. Residue C322 is the Thioimidate intermediate of the active site. IMP contacts are provided by residues 355–357 (DGG), 378–379 (GS), and 402–406 (YRGMG). R418 (proton acceptor) is an active-site residue. Q430 contributes to the IMP binding site. K(+)-binding residues include E489, G490, and G491.

This sequence belongs to the IMPDH/GMPR family. Homotetramer. Requires K(+) as cofactor.

It localises to the cytoplasm. The enzyme catalyses IMP + NAD(+) + H2O = XMP + NADH + H(+). It functions in the pathway purine metabolism; XMP biosynthesis via de novo pathway; XMP from IMP: step 1/1. Its activity is regulated as follows. Mycophenolic acid (MPA) is a non-competitive inhibitor that prevents formation of the closed enzyme conformation by binding to the same site as the amobile flap. In contrast, mizoribine monophosphate (MZP) is a competitive inhibitor that induces the closed conformation. MPA is a potent inhibitor of mammalian IMPDHs but a poor inhibitor of the bacterial enzymes. MZP is a more potent inhibitor of bacterial IMPDH. Catalyzes the conversion of inosine 5'-phosphate (IMP) to xanthosine 5'-phosphate (XMP), the first committed and rate-limiting step in the de novo synthesis of guanine nucleotides, and therefore plays an important role in the regulation of cell growth. This is Inosine-5'-monophosphate dehydrogenase 1 from Arabidopsis thaliana (Mouse-ear cress).